The chain runs to 609 residues: Membrane protein insertase YidC (609 aa).

The next 5 helical transmembrane spans lie at 8–28 (LILATALSFLVILVWFILFPP), 381–401 (MGWSIIGLTLIIKAIVFPLAL), 451–471 (LPILLQIPIFFSLYKVIFVTI), 509–529 (SLTATILIGILPLLLGISMWL), and 545–565 (IFAWMPWVFMFMLGSFASGLV).

It belongs to the OXA1/ALB3/YidC family. Type 1 subfamily. In terms of assembly, interacts with the Sec translocase complex via SecD. Specifically interacts with transmembrane segments of nascent integral membrane proteins during membrane integration.

It is found in the cell inner membrane. Required for the insertion and/or proper folding and/or complex formation of integral membrane proteins into the membrane. Involved in integration of membrane proteins that insert both dependently and independently of the Sec translocase complex, as well as at least some lipoproteins. Aids folding of multispanning membrane proteins. The chain is Membrane protein insertase YidC from Ruegeria pomeroyi (strain ATCC 700808 / DSM 15171 / DSS-3) (Silicibacter pomeroyi).